The chain runs to 123 residues: Small ribosomal subunit protein uS12cz/uS12cy (123 aa).

It belongs to the universal ribosomal protein uS12 family. Part of the 30S ribosomal subunit.

The protein localises to the plastid. It is found in the chloroplast. In terms of biological role, with S4 and S5 plays an important role in translational accuracy. Located at the interface of the 30S and 50S subunits. This chain is Small ribosomal subunit protein uS12cz/uS12cy (rps12-A), found in Angiopteris evecta (Mule's foot fern).